A 672-amino-acid polypeptide reads, in one-letter code: Transcriptional activator of sulfur metabolism MET4 (672 aa).

Basic and acidic residues predominate over residues 1–10 (MKQEQSHEGD). The interval 1 to 44 (MKQEQSHEGDSYSTEFINLFGKDTATHPSSNNGANNNGMGSTNS) is disordered. The segment covering 29 to 44 (SSNNGANNNGMGSTNS) has biased composition (low complexity). Short sequence motifs (9aaTAD) lie at residues 89–97 (ILLEQLAYV), 102–110 (PSLDNEFSN), and 109–117 (SNVDWNVNT). The interval 95–144 (AYVDNFIPSLDNEFSNVDWNVNTTHNNANNNGADTFSSINANPFDLDEQL) is transcriptional activation. Disordered stretches follow at residues 157–265 (IFPD…NMTS) and 299–347 (TTHT…NITV). Positions 165–174 (SNNNNNSNNG) are enriched in low complexity. The span at 175–188 (NDDHSNHDVLHEDP) shows a compositional bias: basic and acidic residues. An inhibitory region; AdoMet responsiveness; required for interaction with MET30 region spans residues 188–235 (PSTNNRQRNPHFLTQRRNTFLTSQYDQSKSRFSSKNKRNGNNGETNNF). The span at 202-214 (QRRNTFLTSQYDQ) shows a compositional bias: polar residues. Residues 226-238 (NGNNGETNNFGDN) show a composition bias toward low complexity. Polar residues-rich tracts occupy residues 251 to 265 (GSPS…NMTS) and 301 to 321 (HTPN…SSSQ). The interval 312 to 375 (VTSAQNSSSQ…NVPNGAYNSL (64 aa)) is auxiliary; required for high transcriptional activity under nonrepressive growth conditions. Residues 375–403 (LISAGFDNDQIDAIAAIMAYHHQKKIREN) form a required for interaction with MET31 and MET32 region. A Phosphoserine modification is found at S416. Residues 475–574 (PKSNNIHNQR…DNEDDEYDDA (100 aa)) form a disordered region. The segment covering 477–486 (SNNIHNQRQP) has biased composition (polar residues). Basic and acidic residues predominate over residues 487–498 (SRNDHKISRESD). The span at 499–512 (GNNGNDNVHHNNAV) shows a compositional bias: low complexity. 2 stretches are compositionally biased toward basic and acidic residues: residues 519-528 (RGDEIAKIRS) and 537-565 (SDHK…KYSD). S564 carries the post-translational modification Phosphoserine. The region spanning 586-649 (KKELGDDDED…KLLKNLVLSS (64 aa)) is the bZIP domain. Positions 601-612 (KKSHQKKKLKEK) are basic motif. The stretch at 609-648 (LKEKELESSIHELTEIAASLQKRIHTLETENKLLKNLVLS) forms a coiled coil. Residues 614–642 (LESSIHELTEIAASLQKRIHTLETENKLL) are leucine-zipper.

This sequence belongs to the bZIP family. As to quaternary structure, interacts with MET30. Tethered to DNA through two alternate complexes associating MET4 with MET28 and either MET31 or MET32. Interacts with MET28 and CBF1 through its leucine zipper to form a heteromeric complex.

Its subcellular location is the nucleus. Functionally, positive trans-acting factor capable of stimulating the transcription of the MET genes from the methionine biosynthetic pathway. MET4, MET28 and CBF1 are required for full induction of MET25 and MET16 gene transcription. MET4 controls as well the derepression of MET6. Required for the transcription of genes necessary for sulfur amino acid biosynthesis. Involved in the transcription activation of MET28 and MET30. Required for MET3 gene expression via assembly of the MET4-MET28-MET31 and MET4-MET28-MET32 complexes. Involved in response to cadmium and arsenic. Cadmium-activated MET4 also induces glutathione biosynthesis. The chain is Transcriptional activator of sulfur metabolism MET4 (MET4) from Saccharomyces cerevisiae (strain ATCC 204508 / S288c) (Baker's yeast).